The primary structure comprises 28 residues: ASGGTVGXYGAWMRSXSLVSXSTITTFS.

Antibacterial activity against X.campestris, especially strain G, and P.solacearum PO1. This Bacillus subtilis protein is Antibacterial protein LC3.